Here is a 638-residue protein sequence, read N- to C-terminus: RAF proto-oncogene serine/threonine-protein kinase (638 aa).

Serine 43 carries the post-translational modification Phosphoserine. In terms of domain architecture, RBD spans 56–130; it reads STMRVYLPNK…VGAELQVDFL (75 aa). The segment at 137 to 183 adopts a Phorbol-ester/DAG-type zinc-finger fold; sequence THNFVRKTFLKLAFCDICQKFLLNAFRCQTCGYKFHEHCSTKVPTMC. Residues histidine 138, cysteine 151, cysteine 154, cysteine 164, cysteine 167, histidine 172, cysteine 175, and cysteine 183 each coordinate Zn(2+). Position 257 is a phosphoserine (serine 257). Threonine 266 carries the phosphothreonine; by autocatalysis modification. A disordered region spans residues 279–323; the sequence is LRSHSESGSPNNLSPTGWSNAKAPAPTHREKAASSTGQEKNKIRA. The segment covering 284–297 has biased composition (polar residues); that stretch reads ESGSPNNLSPTGWS. Serine 329 carries the post-translational modification Phosphoserine. Positions 340-600 constitute a Protein kinase domain; sequence VMLSSRIGSG…PQILSSIELL (261 aa). ATP contacts are provided by residues 346-354 and lysine 366; that span reads IGSGSFGTV. The active-site Proton acceptor is the aspartate 459. Residue serine 490 is modified to Phosphoserine.

This sequence belongs to the protein kinase superfamily. TKL Ser/Thr protein kinase family. RAF subfamily. Requires Zn(2+) as cofactor. Post-translationally, phosphorylation at Ser-257 inactivates kinase activity. Dephosphorylation of Ser-257 by a complex containing protein phosphatase 1 relieves inactivation, leading to stimulate RAF1 activity.

The protein localises to the cytoplasm. Its subcellular location is the cell membrane. It carries out the reaction L-seryl-[protein] + ATP = O-phospho-L-seryl-[protein] + ADP + H(+). It catalyses the reaction L-threonyl-[protein] + ATP = O-phospho-L-threonyl-[protein] + ADP + H(+). Serine/threonine-protein kinase that acts as a regulatory link between the membrane-associated Ras GTPases and the MAPK/ERK cascade, and this critical regulatory link functions as a switch determining cell fate decisions. RAF1 activation initiates a mitogen-activated protein kinase (MAPK) cascade that comprises a sequential phosphorylation of the dual-specific MAPK kinases (MAP2K1/MEK1 and MAP2K2/MEK2) and the extracellular signal-regulated kinases (MAPK3/ERK1 and MAPK1/ERK2). This chain is RAF proto-oncogene serine/threonine-protein kinase (raf1), found in Xenopus laevis (African clawed frog).